Consider the following 383-residue polypeptide: MIISSTFDYRKAAKRRLPPFLFHYIDGGAYAEETMRRNYADLQALALRQRILRQVGEVDLSIKLFDQRLNLPIVLAPVGLTGMYARRGEVKAARAAVAKGIPFTLSSVSVCSLAEVHAEVGSGFWFQLYVLKDRGFMRDVLERSWLAGVRTLVFTVDMPVPGARYRDAHSGMSGPYAGLRRILQAVVHPHWAWNVGIMGRPHDLGNVSTYLQKKITLEDYVGWLGANFDPSIGWSDLQWIRDFWKGKMILKGILDPQDAREAVQFGADGIVVSNHGGRQLDGVLSTARALPAIAEVVTGDLTILADSGVRSGLDVVRMIAQGADAVMIGRAFIYALAAAGEKGVMHLLDLFANEMRVAMTLTGVRAVKEITHESLASTDALNQ.

One can recognise an FMN hydroxy acid dehydrogenase domain in the interval 1 to 380; the sequence is MIISSTFDYR…THESLASTDA (380 aa). Y24 provides a ligand contact to substrate. The FMN site is built by S106 and Q127. Y129 serves as a coordination point for substrate. Residue T155 coordinates FMN. R164 provides a ligand contact to substrate. Position 251 (K251) interacts with FMN. H275 (proton acceptor) is an active-site residue. Position 278 (R278) interacts with substrate. Residue 306–330 coordinates FMN; that stretch reads DSGVRSGLDVVRMIAQGADAVMIGR.

This sequence belongs to the FMN-dependent alpha-hydroxy acid dehydrogenase family. It depends on FMN as a cofactor.

It localises to the cell inner membrane. It catalyses the reaction (S)-lactate + A = pyruvate + AH2. Functionally, catalyzes the conversion of L-lactate to pyruvate. Is coupled to the respiratory chain. The chain is L-lactate dehydrogenase from Bartonella quintana (strain Toulouse) (Rochalimaea quintana).